The following is a 430-amino-acid chain: Adenylosuccinate synthetase (430 aa).

Residues 12–18 and 40–42 contribute to the GTP site; these read GDEGKGK and GHT. Aspartate 13 functions as the Proton acceptor in the catalytic mechanism. Aspartate 13 and glycine 40 together coordinate Mg(2+). Residues 13–16, 38–41, threonine 130, arginine 144, glutamine 224, threonine 239, and arginine 303 contribute to the IMP site; these read DEGK and NAGH. Histidine 41 serves as the catalytic Proton donor. 299–305 serves as a coordination point for substrate; that stretch reads TVTGRKR. Residues arginine 305, 331 to 333, and 413 to 415 each bind GTP; these read KLD and STS.

The protein belongs to the adenylosuccinate synthetase family. Homodimer. The cofactor is Mg(2+).

The protein resides in the cytoplasm. The enzyme catalyses IMP + L-aspartate + GTP = N(6)-(1,2-dicarboxyethyl)-AMP + GDP + phosphate + 2 H(+). It functions in the pathway purine metabolism; AMP biosynthesis via de novo pathway; AMP from IMP: step 1/2. Functionally, plays an important role in the de novo pathway of purine nucleotide biosynthesis. Catalyzes the first committed step in the biosynthesis of AMP from IMP. The polypeptide is Adenylosuccinate synthetase (Paracoccus denitrificans (strain Pd 1222)).